We begin with the raw amino-acid sequence, 97 residues long: Large ribosomal subunit protein eL21 (97 aa).

Over residues 1–24 the composition is skewed to basic residues; the sequence is MVQKPHSFRRKTRKKLRKHPRRRG. The disordered stretch occupies residues 1 to 25; it reads MVQKPHSFRRKTRKKLRKHPRRRGL.

This sequence belongs to the eukaryotic ribosomal protein eL21 family.

The sequence is that of Large ribosomal subunit protein eL21 (rpl21e) from Pyrococcus horikoshii (strain ATCC 700860 / DSM 12428 / JCM 9974 / NBRC 100139 / OT-3).